We begin with the raw amino-acid sequence, 251 residues long: uncharacterized protein (251 aa).

An ATP-binding site is contributed by 36–43 (GKQGTGKT). Positions 230–251 (SDNKTENPSNPSLLTKIDDVTR) are disordered.

Its function is as follows. This protein may be involved in virus assembly. Essential for virus function. This is an uncharacterized protein from Sulfolobus spindle-shape virus 1 (SSV1).